The following is a 315-amino-acid chain: Porphobilinogen deaminase (315 aa).

Residue Cys234 is modified to S-(dipyrrolylmethanemethyl)cysteine.

This sequence belongs to the HMBS family. Monomer. Requires dipyrromethane as cofactor.

The catalysed reaction is 4 porphobilinogen + H2O = hydroxymethylbilane + 4 NH4(+). It functions in the pathway porphyrin-containing compound metabolism; protoporphyrin-IX biosynthesis; coproporphyrinogen-III from 5-aminolevulinate: step 2/4. Functionally, tetrapolymerization of the monopyrrole PBG into the hydroxymethylbilane pre-uroporphyrinogen in several discrete steps. The protein is Porphobilinogen deaminase of Mycolicibacterium paratuberculosis (strain ATCC BAA-968 / K-10) (Mycobacterium paratuberculosis).